Consider the following 333-residue polypeptide: tRNA N6-adenosine threonylcarbamoyltransferase (333 aa).

Fe cation-binding residues include histidine 108 and histidine 112. Residues 129-133 (LVSGG), aspartate 161, glutamate 178, and serine 258 each bind substrate. Residue aspartate 286 coordinates Fe cation.

It belongs to the KAE1 / TsaD family. It depends on Fe(2+) as a cofactor.

Its subcellular location is the cytoplasm. The catalysed reaction is L-threonylcarbamoyladenylate + adenosine(37) in tRNA = N(6)-L-threonylcarbamoyladenosine(37) in tRNA + AMP + H(+). Its function is as follows. Required for the formation of a threonylcarbamoyl group on adenosine at position 37 (t(6)A37) in tRNAs that read codons beginning with adenine. Is probably involved in the transfer of the threonylcarbamoyl moiety of threonylcarbamoyl-AMP (TC-AMP) to the N6 group of A37. This Pyrobaculum islandicum (strain DSM 4184 / JCM 9189 / GEO3) protein is tRNA N6-adenosine threonylcarbamoyltransferase.